The following is an 85-amino-acid chain: MDISRTEQRILHLMAQGGRIEISRDDDRKIENVSCFTRDGWLYPGVDLDLFRRLKRLKAIKSSGGQPYRITERGLTLVRSQLDNR.

It belongs to the UPF0386 family.

In Rhizobium etli (strain CIAT 652), this protein is UPF0386 protein RHECIAT_CH0001945.